Consider the following 96-residue polypeptide: Small ribosomal subunit protein bS6 (96 aa).

It belongs to the bacterial ribosomal protein bS6 family.

In terms of biological role, binds together with bS18 to 16S ribosomal RNA. The chain is Small ribosomal subunit protein bS6 (rpsF) from Mycobacterium bovis (strain ATCC BAA-935 / AF2122/97).